A 20-amino-acid polypeptide reads, in one-letter code: Small ribosomal subunit protein bS20 (20 aa).

The segment at 1 to 20 (ANNPGARKAIRKIEARTEVN) is disordered. Positions 11–20 (RKIEARTEVN) are enriched in basic and acidic residues.

Belongs to the bacterial ribosomal protein bS20 family.

Binds directly to 16S ribosomal RNA. The protein is Small ribosomal subunit protein bS20 (rpsT) of Brevundimonas vesicularis (Pseudomonas vesicularis).